Here is a 443-residue protein sequence, read N- to C-terminus: UDP-N-acetylmuramate--L-alanine ligase (443 aa).

110–116 (GAHGKTS) contacts ATP.

This sequence belongs to the MurCDEF family.

It is found in the cytoplasm. It catalyses the reaction UDP-N-acetyl-alpha-D-muramate + L-alanine + ATP = UDP-N-acetyl-alpha-D-muramoyl-L-alanine + ADP + phosphate + H(+). The protein operates within cell wall biogenesis; peptidoglycan biosynthesis. Functionally, cell wall formation. The polypeptide is UDP-N-acetylmuramate--L-alanine ligase (Lactococcus lactis subsp. cremoris (strain MG1363)).